Reading from the N-terminus, the 460-residue chain is Baeyer-Villiger oxidase AgnL3 (460 aa).

Belongs to the questin oxidase family. The cofactor is NADPH.

Its pathway is secondary metabolite biosynthesis. Functionally, baeyer-Villiger oxidase; part of the gene cluster that mediates the biosynthesis of agnestins, dihydroxy-xanthone metabolites. The pathway begins with the assembly and cyclization of atrochrysone thioester by the non-reducing polyketide synthase Agnpks1. The atrochrysone carboxyl ACP thioesterase AgnL7 then breaks the thioester bond and releases the atrochrysone carboxylic acid as the first enzyme-free intermediate. The decarboxylase AgnL1 then catalyzes the concerted decarboxylation-elimination required to convert atochrysone carboxylic acid into emodin anthrone, which is further oxidized to emodin by the anthrone oxygenase AgnL2. Emodin then undergoes reduction catalyzed by the oxidoreductase AgnL4 to yield the dihydroquinone tautomer which is the substrate for reduction by the short chain dehydrogenase AgnL6 reduction to produce hydroxyketone, followed by AgnL8 dehydration and likely spontaneous autoxidation to chrysophanol. Baeyer-Villiger oxidation by the oxidase AgnL3 leads to monodictyphenone via cleavage of the C-10/C-10a bond of chrysophanol. Alternative cleavage at the C-4a/C-10 bond of chrysophanol also leads to the formation some cephalone F. Further conversion to agnestins A and B, requires reduction to dihydro-monodictyphenone, oxidation to agnestin C probably via an epoxide, and rearrangement to either agnestin A or agnestin B directly, although agnestin A or agnestin B can also interconvert. Within the cluster, AgnR1 is the only unassigned oxidoreductase present which could be involved in this conversion. However, AgnR1 seems not to be involved in this step, and thus genes involved in the proposed oxidation/reduction may be located elsewhere on the genome. Further agnestin A derivatives are probably formed by spontaneous decarboxylations, dehydrations and methanolysis reactions. The sequence is that of Baeyer-Villiger oxidase AgnL3 from Paecilomyces divaricatus (Penicillium divaricatum).